The following is a 353-amino-acid chain: Ribosome biogenesis protein BRX1 homolog (353 aa).

The segment covering 1-10 (MAATKRKRRG) has biased composition (basic residues). Positions 1-46 (MAATKRKRRGGFAVQAKKPKRNEIDAEPPAKRHATAEEVEEEERDR) are disordered. The span at 21-36 (RNEIDAEPPAKRHATA) shows a compositional bias: basic and acidic residues. Positions 60–249 (ERILIFSSRG…LIKIFQGSFG (190 aa)) constitute a Brix domain. A Glycyl lysine isopeptide (Lys-Gly) (interchain with G-Cter in SUMO2) cross-link involves residue Lys-160. Position 261 is a phosphoserine (Ser-261). The residue at position 276 (Lys-276) is an N6-acetyllysine. Residues Lys-314 and Lys-322 each participate in a glycyl lysine isopeptide (Lys-Gly) (interchain with G-Cter in SUMO2) cross-link.

Belongs to the BRX1 family.

The protein resides in the nucleus. It localises to the nucleolus. Functionally, required for biogenesis of the 60S ribosomal subunit. The sequence is that of Ribosome biogenesis protein BRX1 homolog (BRIX1) from Homo sapiens (Human).